We begin with the raw amino-acid sequence, 206 residues long: Ribosomal RNA large subunit methyltransferase E (206 aa).

S-adenosyl-L-methionine contacts are provided by G61, W63, D81, D97, and D122. The Proton acceptor role is filled by K162.

Belongs to the class I-like SAM-binding methyltransferase superfamily. RNA methyltransferase RlmE family.

The protein resides in the cytoplasm. The enzyme catalyses uridine(2552) in 23S rRNA + S-adenosyl-L-methionine = 2'-O-methyluridine(2552) in 23S rRNA + S-adenosyl-L-homocysteine + H(+). Its function is as follows. Specifically methylates the uridine in position 2552 of 23S rRNA at the 2'-O position of the ribose in the fully assembled 50S ribosomal subunit. The polypeptide is Ribosomal RNA large subunit methyltransferase E (Neisseria meningitidis serogroup C / serotype 2a (strain ATCC 700532 / DSM 15464 / FAM18)).